The sequence spans 214 residues: Killer cell lectin-like receptor subfamily B member 1 (214 aa).

Topologically, residues 1-42 are cytoplasmic; it reads MDAPVLYAELNLAETRGLRCTSAPSLPQDACQGPGWHRVALK. Residues 43–63 traverse the membrane as a helical; Signal-anchor for type II membrane protein segment; sequence LGCAGLIFLLMVLSVLVGFLV. Residues 64-214 are Extracellular-facing; the sequence is QKPLIEKCSV…WICQKTLKHV (151 aa). In terms of domain architecture, C-type lectin spans 98-208; the sequence is HCDKCLFTSQ…CSSDNHWICQ (111 aa). Cystine bridges form between C119–C207 and C186–C199.

Its subcellular location is the membrane. In Mus musculus (Mouse), this protein is Killer cell lectin-like receptor subfamily B member 1 (Klrb1).